The chain runs to 313 residues: Olfactory receptor 5D18 (313 aa).

Residues 1 to 26 (MLLTDRNTSGTTFTLLGFSDYPELQV) lie on the Extracellular side of the membrane. Asn7 is a glycosylation site (N-linked (GlcNAc...) asparagine). The helical transmembrane segment at 27–47 (PLFLVFLAIYNVTVLGNIGLI) threads the bilayer. The Cytoplasmic segment spans residues 48 to 55 (VIIKINPK). The chain crosses the membrane as a helical span at residues 56–76 (LHTPMYFFLSQLSFVDFCYSS). The Extracellular portion of the chain corresponds to 77–100 (IIAPKMLVNLVVKDRTISFLGCVV). A disulfide bond links Cys98 and Cys190. Residues 101 to 121 (QFFFFCTFVVTESFLLAVMAY) traverse the membrane as a helical segment. Topologically, residues 122–140 (DRFVAICNPLLYTVNMSQK) are cytoplasmic. A helical transmembrane segment spans residues 141–161 (LCVLLVVGSYAWGVSCSLELT). At 162 to 197 (CSALKLCFHGFNTINHFFCEFSSLLSLSCSDTYINQ) the chain is on the extracellular side. The helical transmembrane segment at 198 to 218 (WLLFFLATFNEISTLLIVLTS) threads the bilayer. At 219–238 (YAFIVVTILKMRSVSGRRKA) the chain is on the cytoplasmic side. Residues 239–259 (FSTCASHLTAITIFHGTILFL) form a helical membrane-spanning segment. Topologically, residues 260-272 (YCVPNSKNSRHTV) are extracellular. A helical membrane pass occupies residues 273–293 (KVASVFYTVVIPMLNPLIYSL). At 294 to 313 (RNKDVKDTVTEILDTKVFSY) the chain is on the cytoplasmic side.

It belongs to the G-protein coupled receptor 1 family.

The protein resides in the cell membrane. Odorant receptor. The polypeptide is Olfactory receptor 5D18 (OR5D18) (Homo sapiens (Human)).